The sequence spans 229 residues: C-type lectin domain family 1 member B (229 aa).

Residues 1–33 (MQDEDGYITLNIKTRKPALISVGSASSSWWRVM) lie on the Cytoplasmic side of the membrane. At tyrosine 7 the chain carries Phosphotyrosine. The ITAM motif lies at 7–10 (YITL). The chain crosses the membrane as a helical; Signal-anchor for type II membrane protein span at residues 34–54 (ALILLILCVGMVVGLVALGIW). Topologically, residues 55 to 229 (SVMQRNYLQG…AGMTKVDQLP (175 aa)) are extracellular. N-linked (GlcNAc...) asparagine glycosylation occurs at asparagine 68. Cysteine 102 and cysteine 113 are joined by a disulfide. Residues 109–217 (YGDSCYGFFR…CENKHYLMCE (109 aa)) enclose the C-type lectin domain. Residues asparagine 120 and asparagine 134 are each glycosylated (N-linked (GlcNAc...) asparagine). 2 cysteine pairs are disulfide-bonded: cysteine 130–cysteine 216 and cysteine 195–cysteine 208.

As to quaternary structure, homodimer. Interacts (via cytoplasmic domain) with RACK1; promotes CLEC1B ubiquitination and proteasome-mediated degradation. Interacts (dimer) with SYK (via SH2 domains). Interacts with PDPN; the interaction is independent of CLEC1B glycosylation and activates CLEC1B. In terms of processing, glycosylated. Post-translationally, phosphorylated on tyrosine residue in response to rhodocytin binding. In terms of tissue distribution, expressed preferentially in the liver. Also expressed in immune cells of myeloid origin and on the surface of platelets.

The protein localises to the membrane. C-type lectin-like receptor that functions as a platelet receptor for the lymphatic endothelial marker, PDPN. After ligand activation, signals via sequential activation of SRC and SYK tyrosine kinases leading to activation of PLCG2. Its function is as follows. (Microbial infection) Acts as a receptor for the platelet-aggregating snake venom protein rhodocytin. Rhodocytin binding leads to tyrosine phosphorylation and this promotes the binding of spleen tyrosine kinase (SYK) and initiation of downstream tyrosine phosphorylation events and activation of PLCG2. Functionally, (Microbial infection) Acts as an attachment factor for Human immunodeficiency virus type 1 (HIV-1) and facilitates its capture by platelets. The chain is C-type lectin domain family 1 member B (CLEC1B) from Homo sapiens (Human).